A 646-amino-acid polypeptide reads, in one-letter code: Serine/threonine-protein kinase PLK3 (646 aa).

A disordered region spans residues 1 to 35 (MEPAAGFLSPRPFQRAAAAPAPPAGPGPPPSALRG). Positions 10-19 (PRPFQRAAAA) are enriched in low complexity. Pro residues predominate over residues 20-31 (PAPPAGPGPPPS). The 253-residue stretch at 62–314 (YLKGRLLGKG…IDQILRHDFF (253 aa)) folds into the Protein kinase domain. ATP is bound by residues 68–76 (LGKGGFARC) and Lys91. Residue Asp185 is the Proton acceptor of the active site. The tract at residues 381–417 (GHQDARPEAPAASGPAPVSLVETAPEDSSPRGTLASS) is disordered. 2 consecutive POLO box domains span residues 463 to 541 (WVSK…YMEQ) and 562 to 645 (LLLQ…DRSP).

This sequence belongs to the protein kinase superfamily. Ser/Thr protein kinase family. CDC5/Polo subfamily. In terms of assembly, interacts (via the POLO-box domain) with CIB1; leading to inhibit PLK3 kinase activity. Interacts with GOLGB1. Phosphorylated in an ATM-dependent manner following DNA damage. Phosphorylated as cells enter mitosis and dephosphorylated as cells exit mitosis. As to expression, transcripts are highly detected in placenta, lung, followed by skeletal muscle, heart, pancreas, ovaries and kidney and weakly detected in liver and brain. May have a short half-live. In cells of hematopoietic origin, strongly and exclusively detected in terminally differentiated macrophages. Transcript expression appears to be down-regulated in primary lung tumor.

The protein localises to the cytoplasm. It localises to the nucleus. It is found in the nucleolus. The protein resides in the golgi apparatus. Its subcellular location is the cytoskeleton. The protein localises to the microtubule organizing center. It localises to the centrosome. It carries out the reaction L-seryl-[protein] + ATP = O-phospho-L-seryl-[protein] + ADP + H(+). The catalysed reaction is L-threonyl-[protein] + ATP = O-phospho-L-threonyl-[protein] + ADP + H(+). Serine/threonine-protein kinase involved in cell cycle regulation, response to stress and Golgi disassembly. Polo-like kinases act by binding and phosphorylating proteins that are already phosphorylated on a specific motif recognized by the POLO box domains. Phosphorylates ATF2, BCL2L1, CDC25A, CDC25C, CHEK2, HIF1A, JUN, p53/TP53, p73/TP73, PTEN, TOP2A and VRK1. Involved in cell cycle regulation: required for entry into S phase and cytokinesis. Phosphorylates BCL2L1, leading to regulate the G2 checkpoint and progression to cytokinesis during mitosis. Plays a key role in response to stress: rapidly activated upon stress stimulation, such as ionizing radiation, reactive oxygen species (ROS), hyperosmotic stress, UV irradiation and hypoxia. Involved in DNA damage response and G1/S transition checkpoint by phosphorylating CDC25A, p53/TP53 and p73/TP73. Phosphorylates p53/TP53 in response to reactive oxygen species (ROS), thereby promoting p53/TP53-mediated apoptosis. Phosphorylates CHEK2 in response to DNA damage, promoting the G2/M transition checkpoint. Phosphorylates the transcription factor p73/TP73 in response to DNA damage, leading to inhibit p73/TP73-mediated transcriptional activation and pro-apoptotic functions. Phosphorylates HIF1A and JUN is response to hypoxia. Phosphorylates ATF2 following hyperosmotic stress in corneal epithelium. Also involved in Golgi disassembly during the cell cycle: part of a MEK1/MAP2K1-dependent pathway that induces Golgi fragmentation during mitosis by mediating phosphorylation of VRK1. May participate in endomitotic cell cycle, a form of mitosis in which both karyokinesis and cytokinesis are interrupted and is a hallmark of megakaryocyte differentiation, via its interaction with CIB1. This Homo sapiens (Human) protein is Serine/threonine-protein kinase PLK3 (PLK3).